A 234-amino-acid polypeptide reads, in one-letter code: Large ribosomal subunit protein uL1 (234 aa).

This sequence belongs to the universal ribosomal protein uL1 family. In terms of assembly, part of the 50S ribosomal subunit.

Functionally, binds directly to 23S rRNA. The L1 stalk is quite mobile in the ribosome, and is involved in E site tRNA release. Its function is as follows. Protein L1 is also a translational repressor protein, it controls the translation of the L11 operon by binding to its mRNA. The chain is Large ribosomal subunit protein uL1 from Pectobacterium atrosepticum (strain SCRI 1043 / ATCC BAA-672) (Erwinia carotovora subsp. atroseptica).